A 193-amino-acid polypeptide reads, in one-letter code: UPF0397 protein PA0141 (193 aa).

A run of 5 helical transmembrane segments spans residues 11 to 31 (VTIA…SIPI), 43 to 63 (FLVF…GLLG), 69 to 89 (FFLF…LGFL), 109 to 129 (ILFF…LIAP), and 147 to 167 (GFLV…FLMS).

Belongs to the UPF0397 family.

Its subcellular location is the cell membrane. This Phytoplasma australiense protein is UPF0397 protein PA0141.